Here is a 499-residue protein sequence, read N- to C-terminus: Glucose-6-phosphate exchanger SLC37A2 (499 aa).

The chain crosses the membrane as a helical span at residues 21 to 40 (YRGFIIVMTFLFYTCYHMSR). N-linked (GlcNAc...) asparagine glycans are attached at residues N53, N62, and N66. 11 consecutive transmembrane segments (helical) span residues 86–106 (GSLD…SGIF), 116–136 (LSGG…GYYW), 138–158 (IHAL…QTTG), 187–207 (AVGN…AWGL), 208–228 (SFIV…FFLV), 302–322 (LCLL…PLYI), 334–354 (GDLS…AGGI), 362–382 (AITC…YNYL), 391–411 (VAML…ITTA), 434–454 (AIID…AGVL), and 458–478 (GWNY…LLLV).

This sequence belongs to the major facilitator superfamily. Organophosphate:Pi antiporter (OPA) (TC 2.A.1.4) family.

It is found in the endoplasmic reticulum membrane. The enzyme catalyses D-glucose 6-phosphate(in) + phosphate(out) = D-glucose 6-phosphate(out) + phosphate(in). In terms of biological role, inorganic phosphate and glucose-6-phosphate antiporter. May transport cytoplasmic glucose-6-phosphate into the lumen of the endoplasmic reticulum and translocate inorganic phosphate into the opposite direction. In Xenopus tropicalis (Western clawed frog), this protein is Glucose-6-phosphate exchanger SLC37A2.